The primary structure comprises 349 residues: Heparin sulfate O-sulfotransferase (349 aa).

At 1–17 (MFRKLLKMWILLRPTHW) the chain is on the cytoplasmic side. A helical; Signal-anchor for type II membrane protein membrane pass occupies residues 18 to 38 (LILIALCAVTCAGYWLLWSEI). At 39-349 (RLEHAFKPLS…KFMYEKIRPK (311 aa)) the chain is on the lumenal side. Residues Asn107 and Asn126 are each glycosylated (N-linked (GlcNAc...) asparagine). Active-site residues include His139 and His141. Disulfide bonds link Cys200–Cys208 and Cys221–Cys227. N-linked (GlcNAc...) asparagine glycosylation is present at Asn282.

The protein belongs to the sulfotransferase 3 family. In terms of assembly, homotrimer.

It is found in the golgi apparatus membrane. In terms of biological role, catalyzes the transfer of sulfate to the C2-position of selected hexuronic acid residues within the maturing heparan sulfate (HS). In Drosophila melanogaster (Fruit fly), this protein is Heparin sulfate O-sulfotransferase.